The primary structure comprises 71 residues: Small, acid-soluble spore protein 2 (71 aa).

This sequence belongs to the alpha/beta-type SASP family.

SASP are bound to spore DNA. They are double-stranded DNA-binding proteins that cause DNA to change to an a-like conformation. They protect the DNA backbone from chemical and enzymatic cleavage and are thus involved in dormant spore's high resistance to UV light. The polypeptide is Small, acid-soluble spore protein 2 (Bacillus subtilis).